The primary structure comprises 109 residues: MSIKIIVPREWKSFPDLQLGWELHRIISLRQSQVQTATGVEASFNGVMAVCTEYSFYLWFRKTDDTNIIPDSKYSLISTQFFESPVSPLENIAYSPKYSTNESCSDKEC.

This is an uncharacterized protein from Microplitis demolitor bracovirus (isolate Webb) (MdBV).